Here is a 585-residue protein sequence, read N- to C-terminus: Aspartate--tRNA ligase (585 aa).

Residue glutamate 173 coordinates L-aspartate. Residues 197–200 are aspartate; sequence QTLK. Arginine 219 lines the L-aspartate pocket. ATP contacts are provided by residues 219–221 and glutamine 228; that span reads RDE. An L-aspartate-binding site is contributed by histidine 446. An ATP-binding site is contributed by glutamate 480. Residue arginine 487 coordinates L-aspartate. 532 to 535 lines the ATP pocket; the sequence is GLDR.

Belongs to the class-II aminoacyl-tRNA synthetase family. Type 1 subfamily. As to quaternary structure, homodimer.

The protein localises to the cytoplasm. The catalysed reaction is tRNA(Asp) + L-aspartate + ATP = L-aspartyl-tRNA(Asp) + AMP + diphosphate. In terms of biological role, catalyzes the attachment of L-aspartate to tRNA(Asp) in a two-step reaction: L-aspartate is first activated by ATP to form Asp-AMP and then transferred to the acceptor end of tRNA(Asp). The polypeptide is Aspartate--tRNA ligase (Parabacteroides distasonis (strain ATCC 8503 / DSM 20701 / CIP 104284 / JCM 5825 / NCTC 11152)).